A 252-amino-acid polypeptide reads, in one-letter code: 2-succinyl-6-hydroxy-2,4-cyclohexadiene-1-carboxylate synthase (252 aa).

The protein belongs to the AB hydrolase superfamily. MenH family. In terms of assembly, monomer.

It catalyses the reaction 5-enolpyruvoyl-6-hydroxy-2-succinyl-cyclohex-3-ene-1-carboxylate = (1R,6R)-6-hydroxy-2-succinyl-cyclohexa-2,4-diene-1-carboxylate + pyruvate. It functions in the pathway quinol/quinone metabolism; 1,4-dihydroxy-2-naphthoate biosynthesis; 1,4-dihydroxy-2-naphthoate from chorismate: step 3/7. It participates in quinol/quinone metabolism; menaquinone biosynthesis. Its function is as follows. Catalyzes a proton abstraction reaction that results in 2,5-elimination of pyruvate from 2-succinyl-5-enolpyruvyl-6-hydroxy-3-cyclohexene-1-carboxylate (SEPHCHC) and the formation of 2-succinyl-6-hydroxy-2,4-cyclohexadiene-1-carboxylate (SHCHC). The chain is 2-succinyl-6-hydroxy-2,4-cyclohexadiene-1-carboxylate synthase from Klebsiella pneumoniae subsp. pneumoniae (strain ATCC 700721 / MGH 78578).